Consider the following 310-residue polypeptide: Ribosomal RNA small subunit methyltransferase H (310 aa).

Residues 33–35 (AGH), Asp-53, Phe-79, Asp-100, and Gln-107 each bind S-adenosyl-L-methionine.

This sequence belongs to the methyltransferase superfamily. RsmH family.

The protein resides in the cytoplasm. The enzyme catalyses cytidine(1402) in 16S rRNA + S-adenosyl-L-methionine = N(4)-methylcytidine(1402) in 16S rRNA + S-adenosyl-L-homocysteine + H(+). Its function is as follows. Specifically methylates the N4 position of cytidine in position 1402 (C1402) of 16S rRNA. This chain is Ribosomal RNA small subunit methyltransferase H, found in Clostridium botulinum (strain Eklund 17B / Type B).